The primary structure comprises 404 residues: Glutamyl-tRNA reductase (404 aa).

Residues 47-50 (TCNR), S94, 99-101 (EQE), and Q105 contribute to the substrate site. C48 (nucleophile) is an active-site residue. Residue 174–179 (GAGEMG) participates in NADP(+) binding.

Homotetramer.

It carries out the reaction (S)-4-amino-5-oxopentanoate + tRNA(Glu) + NADP(+) = L-glutamyl-tRNA(Glu) + NADPH + H(+). Its pathway is porphyrin-containing compound metabolism; protoporphyrin-IX biosynthesis; 5-aminolevulinate from L-glutamyl-tRNA(Glu): step 1/2. Its activity is regulated as follows. Inhibited by heavy metal compounds, Zn(2+), and heme. Also competitively inhibited by glutamycin. In terms of biological role, catalyzes the NADPH-dependent reduction of glutamyl-tRNA(Glu) to glutamate 1-semialdehyde (GSA). In the absence of NADPH, exhibits substrate esterase activity, leading to the release of glutamate from tRNA. The sequence is that of Glutamyl-tRNA reductase (hemA) from Methanopyrus kandleri (strain AV19 / DSM 6324 / JCM 9639 / NBRC 100938).